The sequence spans 386 residues: MASALEAIKYDRGRLFIIDQLQLPHVTKFIPIDSSEAGWHAIKAMQVRGAPAIAIVAVLSLAVEMLNLVSENMIPEDGEDVRAYIEQKMDYLVSSRPTAVNLSDSAQKIKLLLDQRARKSGLSGVETAMAFIQHAEQMLARDLADNHSIGEYGATWILKNTRAALEGGNTCVLTHCNTGSLATAGYGTALGIIRRLHEHGRLSRAYCTETRPYNQGARLTAYELVSDKIPATLITDSMAGQLLANPDKKIAAIVVGADRVAANGDTANKIGTYTLAVLAKFHNIKFVVAAPRTTIDMKTKTGNEIIIEERQSSEVTKIRGPCEGDGDHREAVMETIKIAADGIDVWNPAFDVTPAALIDAIVTEVGVETKDSSGQFHLSSLFESMA.

Asp-258 (proton donor) is an active-site residue.

Belongs to the eIF-2B alpha/beta/delta subunits family. MtnA subfamily.

The protein localises to the cytoplasm. The protein resides in the nucleus. The enzyme catalyses 5-(methylsulfanyl)-alpha-D-ribose 1-phosphate = 5-(methylsulfanyl)-D-ribulose 1-phosphate. It participates in amino-acid biosynthesis; L-methionine biosynthesis via salvage pathway; L-methionine from S-methyl-5-thio-alpha-D-ribose 1-phosphate: step 1/6. Its function is as follows. Catalyzes the interconversion of methylthioribose-1-phosphate (MTR-1-P) into methylthioribulose-1-phosphate (MTRu-1-P). This chain is Methylthioribose-1-phosphate isomerase, found in Uncinocarpus reesii (strain UAMH 1704).